A 666-amino-acid chain; its full sequence is ATP-dependent zinc metalloprotease FtsH (666 aa).

The tract at residues Met-1–Pro-23 is disordered. The Cytoplasmic segment spans residues Met-1–Arg-27. The helical transmembrane segment at Trp-28–Pro-48 threads the bilayer. At Ser-49 to Gln-125 the chain is on the extracellular side. The helical transmembrane segment at Val-126–Ser-146 threads the bilayer. Over Gly-147–Leu-666 the chain is Cytoplasmic. Gly-219–Thr-226 provides a ligand contact to ATP. Residue His-442 participates in Zn(2+) binding. Residue Glu-443 is part of the active site. Residues His-446 and Asp-518 each contribute to the Zn(2+) site. Residues Pro-626–Leu-666 form a disordered region. The span at Gly-641 to Gly-653 shows a compositional bias: low complexity.

This sequence in the central section; belongs to the AAA ATPase family. The protein in the C-terminal section; belongs to the peptidase M41 family. As to quaternary structure, homohexamer. Zn(2+) serves as cofactor.

Its subcellular location is the cell membrane. Acts as a processive, ATP-dependent zinc metallopeptidase for both cytoplasmic and membrane proteins. Plays a role in the quality control of integral membrane proteins. This chain is ATP-dependent zinc metalloprotease FtsH, found in Acidothermus cellulolyticus (strain ATCC 43068 / DSM 8971 / 11B).